The following is a 282-amino-acid chain: Biotin synthase (282 aa).

Residues 1-228 (MQEIFLCSIS…NARLMVAGGR (228 aa)) form the Radical SAM core domain. [4Fe-4S] cluster is bound by residues cysteine 17, cysteine 21, and cysteine 24. [2Fe-2S] cluster contacts are provided by cysteine 61, cysteine 96, cysteine 154, and arginine 221.

It belongs to the radical SAM superfamily. Biotin synthase family. As to quaternary structure, homodimer. The cofactor is [4Fe-4S] cluster. Requires [2Fe-2S] cluster as cofactor.

It catalyses the reaction (4R,5S)-dethiobiotin + (sulfur carrier)-SH + 2 reduced [2Fe-2S]-[ferredoxin] + 2 S-adenosyl-L-methionine = (sulfur carrier)-H + biotin + 2 5'-deoxyadenosine + 2 L-methionine + 2 oxidized [2Fe-2S]-[ferredoxin]. Its pathway is cofactor biosynthesis; biotin biosynthesis; biotin from 7,8-diaminononanoate: step 2/2. Its function is as follows. Catalyzes the conversion of dethiobiotin (DTB) to biotin by the insertion of a sulfur atom into dethiobiotin via a radical-based mechanism. This Helicobacter pylori (strain P12) protein is Biotin synthase.